A 1081-amino-acid polypeptide reads, in one-letter code: Teashirt homolog 3 (1081 aa).

Disordered stretches follow at residues 25–104 (LVED…EVQV), 141–161 (PSSE…SSCG), and 238–257 (HYRD…WSKP). The span at 26–37 (VEDDVEPEEQAA) shows a compositional bias: acidic residues. Positions 68 to 87 (SSHEMDSESHISETSDRMAD) are enriched in basic and acidic residues. 2 C2H2-type zinc fingers span residues 214–238 (FRCK…ETGH) and 275–299 (LKCM…KTKH). The span at 238 to 247 (HYRDDNHETD) shows a compositional bias: basic and acidic residues. A disordered region spans residues 325–346 (SLELELPSSPDSTGGTPKATLS). The C2H2-type 3; atypical zinc-finger motif lies at 387 to 410 (KCMECGSSHDTLQELTAHMMVTGH). Residues 474 to 491 (VDKEKAVPDEKPKEREKP) are compositionally biased toward basic and acidic residues. Disordered regions lie at residues 474 to 499 (VDKE…EKYD), 626 to 699 (EKMK…KPLS), 792 to 824 (LTKG…TVTT), and 855 to 897 (TESH…RQSN). Residues 606 to 630 (NFHAMEELVKKVTEKVAKVEEKMKE) adopt a coiled-coil conformation. A compositionally biased stretch (polar residues) spans 660–670 (SDGSFKSQENS). At serine 682 the chain carries Phosphoserine. Composition is skewed to low complexity over residues 800–824 (GCSL…TVTT) and 856–869 (ESHT…SSIS). A DNA-binding region (homeobox; atypical) is located at residues 891–961 (RKGRQSNWNP…NVKYQLRRTG (71 aa)). 2 C2H2-type zinc fingers span residues 976 to 998 (FFCN…LESH) and 1041 to 1064 (YQCK…SKTH).

It belongs to the teashirt C2H2-type zinc-finger protein family. As to quaternary structure, interacts (via N-terminus) with HDAC1 and HDAC2; the interaction is direct. Found in a trimeric complex with APBB1 and HDAC1; the interaction between HDAC1 and APBB1 is mediated by TSHZ3. Interacts (via homeobox domain) with APBB1 (via PID domain 1). Expressed in corticostriatal neurons.

It is found in the nucleus. The protein resides in the cell projection. The protein localises to the growth cone. In terms of biological role, transcriptional regulator involved in developmental processes. Functions in association with APBB1, SET and HDAC factors as a transcriptional repressor, that inhibits the expression of CASP4. TSHZ3-mediated transcription repression involves the recruitment of histone deacetylases HDAC1 and HDAC2. Associates with chromatin in a region surrounding the CASP4 transcriptional start site(s). Regulates the development of neurons involved in both respiratory rhythm and airflow control. Promotes maintenance of nucleus ambiguus (nA) motoneurons, which govern upper airway function, and establishes a respiratory rhythm generator (RRG) activity compatible with survival at birth. Involved in the differentiation of the proximal uretic smooth muscle cells during developmental processes. Involved in the up-regulation of myocardin, that directs the expression of smooth muscle cells in the proximal ureter. Involved in the modulation of glutamatergic synaptic transmission and long-term synaptic potentiation. In Mus musculus (Mouse), this protein is Teashirt homolog 3 (Tshz3).